A 379-amino-acid polypeptide reads, in one-letter code: Succinyl-diaminopimelate desuccinylase (379 aa).

His70 is a binding site for Zn(2+). Residue Asp72 is part of the active site. Asp103 lines the Zn(2+) pocket. Residue Glu137 is the Proton acceptor of the active site. Residues Glu138, Glu166, and His352 each contribute to the Zn(2+) site.

Belongs to the peptidase M20A family. DapE subfamily. In terms of assembly, homodimer. Requires Zn(2+) as cofactor. Co(2+) serves as cofactor.

It carries out the reaction N-succinyl-(2S,6S)-2,6-diaminopimelate + H2O = (2S,6S)-2,6-diaminopimelate + succinate. It participates in amino-acid biosynthesis; L-lysine biosynthesis via DAP pathway; LL-2,6-diaminopimelate from (S)-tetrahydrodipicolinate (succinylase route): step 3/3. In terms of biological role, catalyzes the hydrolysis of N-succinyl-L,L-diaminopimelic acid (SDAP), forming succinate and LL-2,6-diaminopimelate (DAP), an intermediate involved in the bacterial biosynthesis of lysine and meso-diaminopimelic acid, an essential component of bacterial cell walls. This is Succinyl-diaminopimelate desuccinylase from Burkholderia cenocepacia (strain HI2424).